We begin with the raw amino-acid sequence, 142 residues long: Organic hydroperoxide resistance protein-like 2 (142 aa).

This sequence belongs to the OsmC/Ohr family.

The sequence is that of Organic hydroperoxide resistance protein-like 2 from Staphylococcus saprophyticus subsp. saprophyticus (strain ATCC 15305 / DSM 20229 / NCIMB 8711 / NCTC 7292 / S-41).